The chain runs to 220 residues: N-(5'-phosphoribosyl)anthranilate isomerase (220 aa).

This sequence belongs to the TrpF family.

The catalysed reaction is N-(5-phospho-beta-D-ribosyl)anthranilate = 1-(2-carboxyphenylamino)-1-deoxy-D-ribulose 5-phosphate. Its pathway is amino-acid biosynthesis; L-tryptophan biosynthesis; L-tryptophan from chorismate: step 3/5. In Agrobacterium fabrum (strain C58 / ATCC 33970) (Agrobacterium tumefaciens (strain C58)), this protein is N-(5'-phosphoribosyl)anthranilate isomerase.